We begin with the raw amino-acid sequence, 328 residues long: Global transcription regulator sge1 (328 aa).

2 disordered regions span residues 94–120 (PGEK…PRQR) and 251–293 (QMHQ…QYVH). 3 stretches are compositionally biased toward low complexity: residues 106–116 (KSTTQSGGISK), 251–261 (QMHQPQVHQPL), and 282–293 (AHQPQVHQQYVH).

Belongs to the MIT1/WOR1 family.

The protein resides in the nucleus. Global transcriptional regulator of transcription that impacts, but is not absolutely required for secondary metabolism and pathogenicity on maize. Regulates synthesis of multiple secondary metabolites, including fumonisins and fusarins. The chain is Global transcription regulator sge1 from Gibberella moniliformis (strain M3125 / FGSC 7600) (Maize ear and stalk rot fungus).